The chain runs to 541 residues: Developmental and secondary metabolism regulator VEL1 (541 aa).

The Velvet domain maps to 26–220; that stretch reads NRHLWYQLTV…ADQGCRVRIR (195 aa). Residues 40 to 45 carry the Nuclear localization signal motif; it reads ERARAC. Disordered stretches follow at residues 222–447 and 464–483; these read DVRM…MPTQ and PIEA…TGGK. A compositionally biased stretch (basic and acidic residues) spans 230–244; the sequence is GKGSGYDRREEEYAR. Positions 289–298 are enriched in low complexity; it reads APSLPHAPSL. Pro residues-rich tracts occupy residues 299–314, 345–355, and 425–439; these read PHAP…PPAA, APIPPVTPTGP, and SPAP…PAPS. The PEST stretch occupies residues 444 to 472; it reads MPTQSSLAPLKIASLVSPLPPIEAQTEPL.

This sequence belongs to the velvet family. VeA subfamily. As to quaternary structure, component of the heterotrimeric velvet complex composed of LAE1, VEL1 and VEL2; VEL1 acting as a bridging protein between LAE1 and VEL2.

It is found in the nucleus. It localises to the cytoplasm. Functionally, component of the velvet transcription factor complex that controls sexual/asexual developmental ratio in response to light, promoting sexual development in the darkness while stimulating asexual sporulation under illumination. The velvet complex acts as a global regulator for secondary metabolite gene expression. Controls the expression of the gliotoxin gene cluster. Plays a key role in mycoparasitism. In Hypocrea virens (strain Gv29-8 / FGSC 10586) (Gliocladium virens), this protein is Developmental and secondary metabolism regulator VEL1.